Reading from the N-terminus, the 323-residue chain is MQVTFLGTSSGVPTRARNVSAVALRLPQRSELWLFDCGEGTQHQFLRSDLRLSQLRRVFITHMHGDHVFGLPGLLASLGLSGSSAGVDLYGPDPLDAYLHGVLRTSSTRIGYPLAVHPVRGAAESGRIVFEDDDLQVRATPLHHRVPAYAYRVDQKPRAGRFDVAKARDLNIPPGPVYAALKRGETVTLDDGRRIDGHALCGPPRRGASVVYCTDTVFCEAAVELARGADLLIHESTFSHAEAEMAFQRQHSTSTMAAQTAAEAGVSQLVLTHLSPRYAPGNAVTANDLLAEAQAIFPATVLAKDFLSIDVTPQTDPSCCNSS.

Zn(2+) contacts are provided by His62, His64, Asp66, His67, His144, Asp215, and His273. Asp66 (proton acceptor) is an active-site residue.

It belongs to the RNase Z family. In terms of assembly, homodimer. Requires Zn(2+) as cofactor.

It carries out the reaction Endonucleolytic cleavage of RNA, removing extra 3' nucleotides from tRNA precursor, generating 3' termini of tRNAs. A 3'-hydroxy group is left at the tRNA terminus and a 5'-phosphoryl group is left at the trailer molecule.. Zinc phosphodiesterase, which displays some tRNA 3'-processing endonuclease activity. Probably involved in tRNA maturation, by removing a 3'-trailer from precursor tRNA. This chain is Ribonuclease Z, found in Synechococcus sp. (strain WH7803).